Reading from the N-terminus, the 717-residue chain is ATP-dependent RNA helicase homolog DQX1 (717 aa).

A Helicase ATP-binding domain is found at 57–225 (QLESNPTGVV…WGNPPIVHIP (169 aa)). An ATP-binding site is contributed by 70–77 (GEPGSGKS). The DEAQ box motif lies at 170 to 173 (DEAQ). The Helicase C-terminal domain maps to 248 to 447 (ACQAVLELCR…ALMQALEDLD (200 aa)). The interval 694 to 717 (GMADSTAGSKSSSAQEFRDPCVLQ) is disordered. The span at 699 to 708 (TAGSKSSSAQ) shows a compositional bias: polar residues.

It is found in the nucleus. Might be involved in RNA metabolism; it is missing helicase motif III and may not have helicase activity. This Homo sapiens (Human) protein is ATP-dependent RNA helicase homolog DQX1 (DQX1).